A 209-amino-acid polypeptide reads, in one-letter code: Eukaryotic translation initiation factor 4E (209 aa).

MRNA-binding positions include 51 to 52 (WH), 97 to 98 (WE), and 153 to 158 (RKQAYR).

Belongs to the eukaryotic initiation factor 4E family. In terms of assembly, eIF4F is a multi-subunit complex, the composition of which varies with external and internal environmental conditions. It is composed of at least eIF4A, eIF4E and eIF4G. eIF4E is also known to interact with other partners.

Recognizes and binds the 7-methylguanosine-containing mRNA cap during an early step in the initiation of protein synthesis and facilitates ribosome binding by inducing the unwinding of the mRNAs secondary structures. In Candida albicans (strain SC5314 / ATCC MYA-2876) (Yeast), this protein is Eukaryotic translation initiation factor 4E (TIF45).